A 315-amino-acid polypeptide reads, in one-letter code: Pantothenate synthetase (315 aa).

45–52 (MGALHEGH) is an ATP binding site. Catalysis depends on H52, which acts as the Proton donor. Q77 lines the (R)-pantoate pocket. Residue Q77 coordinates beta-alanine. Residue 163–166 (GEKD) participates in ATP binding. Q169 is a (R)-pantoate binding site. Residues V192 and 200–203 (MSSR) each bind ATP.

This sequence belongs to the pantothenate synthetase family. As to quaternary structure, homodimer.

The protein localises to the cytoplasm. It carries out the reaction (R)-pantoate + beta-alanine + ATP = (R)-pantothenate + AMP + diphosphate + H(+). The protein operates within cofactor biosynthesis; (R)-pantothenate biosynthesis; (R)-pantothenate from (R)-pantoate and beta-alanine: step 1/1. Catalyzes the condensation of pantoate with beta-alanine in an ATP-dependent reaction via a pantoyl-adenylate intermediate. The chain is Pantothenate synthetase from Mycobacterium ulcerans (strain Agy99).